A 374-amino-acid chain; its full sequence is Dihydroorotate dehydrogenase (quinone) (374 aa).

Residues Ala78–Lys82 and Thr102 contribute to the FMN site. Lys82 contacts substrate. A substrate-binding site is contributed by Asn127 to Phe131. FMN is bound by residues Asn159 and Asn192. Asn192 is a substrate binding site. Ser195 functions as the Nucleophile in the catalytic mechanism. Asn197 provides a ligand contact to substrate. 2 residues coordinate FMN: Lys230 and Thr258. Asn259–Thr260 serves as a coordination point for substrate. FMN-binding positions include Gly287, Gly316, and Tyr337–Thr338.

Belongs to the dihydroorotate dehydrogenase family. Type 2 subfamily. Monomer. FMN is required as a cofactor.

The protein localises to the cell membrane. The enzyme catalyses (S)-dihydroorotate + a quinone = orotate + a quinol. It functions in the pathway pyrimidine metabolism; UMP biosynthesis via de novo pathway; orotate from (S)-dihydroorotate (quinone route): step 1/1. In terms of biological role, catalyzes the conversion of dihydroorotate to orotate with quinone as electron acceptor. The polypeptide is Dihydroorotate dehydrogenase (quinone) (Acaryochloris marina (strain MBIC 11017)).